We begin with the raw amino-acid sequence, 108 residues long: UPF0060 membrane protein YnfA (108 aa).

The Periplasmic portion of the chain corresponds to 1–5 (MIKTT). A helical transmembrane segment spans residues 6 to 26 (LLFFATALCEIIGCFLPWLWL). Residues 27–30 (KRNA) are Cytoplasmic-facing. Residues 31–51 (SIWLLLPAGISLALFVWLLTL) form a helical membrane-spanning segment. Residues 52-60 (HPAASGRVY) are Periplasmic-facing. Residues 61–81 (AAYGGVYVCTALMWLRVVDGV) form a helical membrane-spanning segment. Residues 82–84 (KLS) lie on the Cytoplasmic side of the membrane. A helical transmembrane segment spans residues 85–105 (LYDWTGALIALCGMLIIVAGW). Residues 106 to 108 (GRT) are Periplasmic-facing.

This sequence belongs to the UPF0060 family.

It is found in the cell inner membrane. In Shigella flexneri serotype 5b (strain 8401), this protein is UPF0060 membrane protein YnfA.